The sequence spans 278 residues: Release factor glutamine methyltransferase (278 aa).

S-adenosyl-L-methionine is bound by residues 116-120, D139, W168, and N182; that span reads GTGTG. Residue 182-185 participates in substrate binding; sequence NPPY.

This sequence belongs to the protein N5-glutamine methyltransferase family. PrmC subfamily.

It carries out the reaction L-glutaminyl-[peptide chain release factor] + S-adenosyl-L-methionine = N(5)-methyl-L-glutaminyl-[peptide chain release factor] + S-adenosyl-L-homocysteine + H(+). Its function is as follows. Methylates the class 1 translation termination release factors RF1/PrfA and RF2/PrfB on the glutamine residue of the universally conserved GGQ motif. In Cereibacter sphaeroides (strain ATCC 17023 / DSM 158 / JCM 6121 / CCUG 31486 / LMG 2827 / NBRC 12203 / NCIMB 8253 / ATH 2.4.1.) (Rhodobacter sphaeroides), this protein is Release factor glutamine methyltransferase.